Here is a 315-residue protein sequence, read N- to C-terminus: Nucleotide-binding protein CGSHiEE_06315 (315 aa).

Residue 8-15 participates in ATP binding; sequence GRSGAGKS. GTP is bound at residue 56 to 59; the sequence is DIRN.

Belongs to the RapZ-like family.

Its function is as follows. Displays ATPase and GTPase activities. The polypeptide is Nucleotide-binding protein CGSHiEE_06315 (Haemophilus influenzae (strain PittEE)).